A 191-amino-acid chain; its full sequence is Transcriptional regulator MET32 (191 aa).

Residues 70–96 are disordered; that stretch reads KKENALPKPPKSSKSKPQDRRNSTGEK. Residues 85–96 are compositionally biased toward basic and acidic residues; it reads KPQDRRNSTGEK. A C2H2-type 1 zinc finger spans residues 98-120; sequence FKCAKCSLEFSRSSDLRRHEKTH. The C2H2-type 2; atypical zinc-finger motif lies at 126–150; sequence NICPQCGKGFARKDALKRHYDTLTC.

In terms of assembly, interacts with MET4 and MET28.

It localises to the cytoplasm. The protein localises to the nucleus. Its function is as follows. Auxiliary transcriptional regulator of sulfur amino acid metabolism. Involved in the transcriptional activation of MET28. This Saccharomyces cerevisiae (strain ATCC 204508 / S288c) (Baker's yeast) protein is Transcriptional regulator MET32 (MET32).